We begin with the raw amino-acid sequence, 342 residues long: Dihydroorotase (342 aa).

The Zn(2+) site is built by H13 and H15. Residues H15–R17 and N41 contribute to the substrate site. The Zn(2+) site is built by K97, H134, and H172. K97 bears the N6-carboxylysine mark. H134 serves as a coordination point for substrate. L217 is a binding site for substrate. Zn(2+) is bound at residue D245. The active site involves D245. Substrate contacts are provided by H249 and A261.

The protein belongs to the metallo-dependent hydrolases superfamily. DHOase family. Class II DHOase subfamily. Homodimer. Zn(2+) serves as cofactor.

The enzyme catalyses (S)-dihydroorotate + H2O = N-carbamoyl-L-aspartate + H(+). Its pathway is pyrimidine metabolism; UMP biosynthesis via de novo pathway; (S)-dihydroorotate from bicarbonate: step 3/3. Its function is as follows. Catalyzes the reversible cyclization of carbamoyl aspartate to dihydroorotate. This Shewanella loihica (strain ATCC BAA-1088 / PV-4) protein is Dihydroorotase.